Reading from the N-terminus, the 564-residue chain is MAKLLSFSDDSRSALERGVNSLADAVRVTIGPRGRNVVLEKKFGAPDIVNDGVTIAKEIELDDPFENLGAKLIQQVASKTKDKAGDGTTTATVLAQAMVHEGLRNVAAGASPIELRRGMEKAVAQLVEELAQLSQAVGGNAIHQVATVSSGGDQEVGRMVSEAMDKVSADGVITVEESKSLATELEVTEGMAFDRGYSSPYFVTDADRQICEFENALLLLTDRKISSVSDLVPILESLQKSGSPLVIIAEEVEGEALATLVVNKNRGVLQVAAVRAPSFGDRRKAALADIAVLTGGTVISEDRAMTLEKVSQDDLGQVRRITISKDNTTIVAKDENRDAVNARVASIKRELDETDSEYDREKLNERIAKLAGGVAVIKVGAPTETELKNRKLRIEDALNATRAAVEEGIVAGGGTTLLRLSKGLRKLAEQQLNGDQRTGVEIVQRALSAPARQIAINAGENGDVVISEMQRLNKGFNAISSTYEDLLGAGILDATKVVRLALQDAVSIASMMVTTELVIADKPEPPAPAGDGGGDPMGGMGGMGGMGGMGGMGGMGGMGMPGMM.

ATP-binding positions include 29–32 (TIGP), 86–90 (DGTTT), Gly413, and Asp493. Residues 521-541 (DKPEPPAPAGDGGGDPMGGMG) are disordered. The span at 530 to 541 (GDGGGDPMGGMG) shows a compositional bias: gly residues.

This sequence belongs to the chaperonin (HSP60) family. Forms a cylinder of 14 subunits composed of two heptameric rings stacked back-to-back. Interacts with the co-chaperonin GroES.

It localises to the cytoplasm. It carries out the reaction ATP + H2O + a folded polypeptide = ADP + phosphate + an unfolded polypeptide.. In terms of biological role, together with its co-chaperonin GroES, plays an essential role in assisting protein folding. The GroEL-GroES system forms a nano-cage that allows encapsulation of the non-native substrate proteins and provides a physical environment optimized to promote and accelerate protein folding. The sequence is that of Chaperonin GroEL 2 from Prochlorococcus marinus (strain MIT 9303).